We begin with the raw amino-acid sequence, 123 residues long: Large ribosomal subunit protein eL8 (123 aa).

It belongs to the eukaryotic ribosomal protein eL8 family. Part of the 50S ribosomal subunit. Probably part of the RNase P complex.

The protein resides in the cytoplasm. Multifunctional RNA-binding protein that recognizes the K-turn motif in ribosomal RNA, the RNA component of RNase P, box H/ACA, box C/D and box C'/D' sRNAs. The polypeptide is Large ribosomal subunit protein eL8 (Thermococcus kodakarensis (strain ATCC BAA-918 / JCM 12380 / KOD1) (Pyrococcus kodakaraensis (strain KOD1))).